The sequence spans 589 residues: Capsid scaffolding protein (589 aa).

Active-site charge relay system residues include H47, S118, and H142. Basic and acidic residues predominate over residues 264 to 273; it reads EKERPKEPEQ. The tract at residues 264–283 is disordered; the sequence is EKERPKEPEQSHVPTESMSH. Positions 307–326 are interaction with pAP; that stretch reads HDGVYLPKDAFFSLIGASRP. Disordered regions lie at residues 421-478 and 514-552; these read RSRS…GDRY and ASPTTTTSHQAEASEPQASTAAAAPSTASSHGSKSAERG. Short sequence motifs (nuclear localization signal) lie at residues 428-433 and 453-459; these read KRRRER and KARKRLK. Positions 453–462 are enriched in basic residues; that stretch reads KARKRLKAHH. Positions 514 to 543 are enriched in low complexity; that stretch reads ASPTTTTSHQAEASEPQASTAAAAPSTASS. The interaction with major capsid protein stretch occupies residues 569–589; the sequence is PPKDMVDLNRRLFVAALNKME.

Belongs to the herpesviridae capsid scaffolding protein family. In terms of assembly, homomultimer. Interacts with major capsid protein. As to quaternary structure, exists in a monomer-dimer equilibrium with the dimer being the active species. Post-translationally, capsid scaffolding protein is cleaved by assemblin after formation of the spherical procapsid. As a result, the capsid obtains its mature, icosahedral shape. Cleavages occur at two or more sites: release (R-site) and maturation (M-site).

It localises to the host cytoplasm. The protein resides in the host nucleus. The catalysed reaction is Cleaves -Ala-|-Ser- and -Ala-|-Ala- bonds in the scaffold protein.. Its function is as follows. Acts as a scaffold protein by binding major capsid protein in the cytoplasm, inducing the nuclear localization of both proteins. Multimerizes in the nucleus such as major capsid protein forms the icosahedral T=16 capsid. Autocatalytic cleavage releases the assembly protein, and subsequently abolishes interaction with major capsid protein. Cleavages products are evicted from the capsid before or during DNA packaging. In terms of biological role, protease that plays an essential role in virion assembly within the nucleus. Catalyzes the cleavage of the assembly protein after formation of the spherical procapsid. By that cleavage, the capsid matures and gains its icosahedral shape. The cleavage sites seem to include -Ala-Ser-, -Ala-Ala-, as well as Ala-Thr bonds. Assemblin and cleavages products are evicted from the capsid before or during DNA packaging. Functionally, plays a major role in capsid assembly. Acts as a scaffold protein by binding major capsid protein. Multimerizes in the nucleus such as major capsid protein forms the icosahedral T=16 capsid. Cleaved by assemblin after capsid completion. The cleavages products are evicted from the capsid before or during DNA packaging. In Simian cytomegalovirus (strain Colburn), this protein is Capsid scaffolding protein (UL80).